Here is a 563-residue protein sequence, read N- to C-terminus: Ribulokinase (563 aa).

Belongs to the ribulokinase family.

It carries out the reaction D-ribulose + ATP = D-ribulose 5-phosphate + ADP + H(+). The enzyme catalyses L-ribulose + ATP = L-ribulose 5-phosphate + ADP + H(+). It participates in carbohydrate degradation; L-arabinose degradation via L-ribulose; D-xylulose 5-phosphate from L-arabinose (bacterial route): step 2/3. This chain is Ribulokinase, found in Mycolicibacterium smegmatis (Mycobacterium smegmatis).